The sequence spans 221 residues: CDP-diacylglycerol--glycerol-3-phosphate 3-phosphatidyltransferase (221 aa).

The next 5 helical transmembrane spans lie at 8 to 28 (ILTV…LYFH), 34 to 54 (WFAL…GYLA), 75 to 95 (MVVI…WLIL), 133 to 153 (AQMV…LEGI), and 187 to 207 (ATWL…ITGW).

This sequence belongs to the CDP-alcohol phosphatidyltransferase class-I family.

The protein resides in the cell membrane. The catalysed reaction is a CDP-1,2-diacyl-sn-glycerol + sn-glycerol 3-phosphate = a 1,2-diacyl-sn-glycero-3-phospho-(1'-sn-glycero-3'-phosphate) + CMP + H(+). It functions in the pathway phospholipid metabolism; phosphatidylglycerol biosynthesis; phosphatidylglycerol from CDP-diacylglycerol: step 1/2. Functionally, this protein catalyzes the committed step to the synthesis of the acidic phospholipids. This is CDP-diacylglycerol--glycerol-3-phosphate 3-phosphatidyltransferase (pgsA) from Cereibacter sphaeroides (strain ATCC 17023 / DSM 158 / JCM 6121 / CCUG 31486 / LMG 2827 / NBRC 12203 / NCIMB 8253 / ATH 2.4.1.) (Rhodobacter sphaeroides).